The chain runs to 345 residues: Pyruvate dehydrogenase E1 component subunit alpha (345 aa).

Heterodimer of an alpha and a beta chain. Requires thiamine diphosphate as cofactor.

It carries out the reaction N(6)-[(R)-lipoyl]-L-lysyl-[protein] + pyruvate + H(+) = N(6)-[(R)-S(8)-acetyldihydrolipoyl]-L-lysyl-[protein] + CO2. The pyruvate dehydrogenase complex catalyzes the overall conversion of pyruvate to acetyl-CoA and CO(2). It contains multiple copies of three enzymatic components: pyruvate dehydrogenase (E1), dihydrolipoamide acetyltransferase (E2) and lipoamide dehydrogenase (E3). In Acholeplasma laidlawii, this protein is Pyruvate dehydrogenase E1 component subunit alpha (pdhA).